The primary structure comprises 724 residues: MDCLCIVTTKKYRYQDEDTPPLEHSPAHLPNQANSPPVIVNTDTLEAPGYELQVNGTEGEMEYEEITLERGNSGLGFSIAGGTDNPHIGDDPSIFITKIIPGGAAAQDGRLRVNDSILFVNEVDVREVTHSAAVEALKEAGSIVRLYVMRRKPPAEKVMEIKLIKGPKGLGFSIAGGVGNQHIPGDNSIYVTKIIEGGAAHKDGRLQIGDKILAVNSVGLEDVMHEDAVAALKNTYDVVYLKVAKPSNAYLSDSYAPPDITTSYSQHLDNEISHSSYLGTDYPTAMTPTSPRRYSPVAKDLLGEEDIPREPRRIVIHRGSTGLGFNIVGGEDGEGIFISFILAGGPADLSGELRKGDQILSVNGVDLRNASHEQAAIALKNAGQTVTIIAQYKPEEYSRFEAKIHDLREQLMNSSLGSGTASLRSNPKRGFYIRALFDYDKTKDCGFLSQALSFRFGDVLHVIDAGDEEWWQARRVHSDSETDDIGFIPSKRRVERREWSRLKAKDWGSSSGSQGREDSVLSYETVTQMEVHYARPIIILGPTKDRANDDLLSEFPDKFGSCVPHTTRPKREYEIDGRDYHFVSSREKMEKDIQAHKFIEAGQYNSHLYGTSVQSVREVAEQGKHCILDVSANAVRRLQAAHLHPIAIFIRPRSLENVLEINKRITEEQARKAFDRATKLEQEFTECFSAIVEGDSFEEIYHKVKRVIEDLSGPYIWVPARERL.

2 S-palmitoyl cysteine lipidation sites follow: Cys3 and Cys5. Residues Gln15 to Ser35 form a disordered region. PDZ domains lie at Glu65–Arg151 and Glu160–Pro246. 2 positions are modified to phosphoserine: Ser73 and Ser142. Tyr240 carries the phosphotyrosine modification. The residue at position 295 (Ser295) is a Phosphoserine. In terms of domain architecture, PDZ 3 spans Arg313 to Lys393. Ser415 and Ser418 each carry phosphoserine. Phosphothreonine is present on Thr420. Residues Ser422, Ser425, Ser449, and Ser480 each carry the phosphoserine modification. An SH3 domain is found at Lys428–Glu498. One can recognise a Guanylate kinase-like domain in the interval Ala534–Glu709. Tyr580 is modified (phosphotyrosine). Ser606 and Ser654 each carry phosphoserine. At Tyr715 the chain carries Phosphotyrosine.

This sequence belongs to the MAGUK family. In terms of assembly, interacts through its PDZ domains with ANO2 and NETO1. Interacts with KCNJ4. Interacts through its first two PDZ domains with GRIN2A, GRIN2B, GRIN2C and GRIN2D. Interacts with ERBB4. Interacts with KCNA1, KCNA2, KCNA3 and KCNA4. Interacts with LRRC4 and LRRC4B. Interacts with SYNGAP1. Interacts with ASIC3. Interacts with SEMA4C. Interacts with CXADR. Interacts with KCND2. Interacts (via first PDZ domain) with CRIPT. Interacts through its first PDZ domain with GRIK2 and KCNA4. Interacts through its second PDZ domain with the PDZ domain of NOS1 or the C-terminus of CAPON. Interacts through its third PDZ domain with NLGN1 and CRIPT, and probably with NLGN2 and NLGN3. Interacts through its guanylate kinase-like domain with DLGAP1/GKAP, DLGAP2, DLGAP3, DLGAP4, MAP1A, BEGAIN and SIPA1L1. Interacts through its guanylate kinase-like domain with KIF13B. Isoform 2 interacts through an L27 domain with HGS/HRS and the first L27 domain of CASK. Interacts with ANKS1B. Interacts with ADR1B. May interact with HTR2A. Interacts with ADAM22, KLHL17 and LGI1. Interacts with FRMPD4 (via C-terminus). Interacts with LRFN1 and LRFN2. Interacts with LRFN4. Interacts (via N-terminal tandem pair of PDZ domains) with GPER1 (via C-terminus tail motif); the interaction is direct and induces the increase of GPER1 protein levels residing at the plasma membrane surface in a estradiol-independent manner. Interacts (via N-terminus tandem pair of PDZ domains) with NOS1 (via N-terminal domain). Interacts with SHANK3. Interacts with GPR85. Interacts with CACNG2 and MPP2 (via the SH3-Guanylate kinase-like sub-module). Interacts with ADGRB1. Found in a complex with PRR7 and GRIN1. Interacts (via PDZ3 domain and to lesser degree via PDZ2 domain) with PRR7. Component of the postsynaptic hippocampal AMPA-type glutamate receptor (AMPAR) complex, at least composed of pore forming AMPAR subunits GRIA1, GRIA2 and GRIA3 and AMPAR auxiliary proteins SHISA6 and SHISA7. Interacts (via its first two PDZ domains) with SHISA6 and SHISA7 (via PDZ-binding motif); the interaction is direct. Interacts (via PDZ domain 2) with SEMA4F (via PDZ-binding motif); this interaction may promote translocation of DLG4/SAP90 to the membrane. Interacts with RPH3A and GRIN2A; this ternary complex regulates NMDA receptor composition at postsynaptic membranes. Interacts with ABR and BCR. Interacts with DGKI (via PDZ-binding motif); controls the localization of DGKI to the synapse. Interacts with C9orf72, SMCR8 and RAB39B. Interacts with ZDHHC5. Interacts with PTEN (via PDZ domain-binding motif); the interaction is induced by NMDA and is required for PTEN location at postsynaptic density. Found in a complex with GRIA1, GRIA2, GRIA3, GRIA4, CACNG8 and CNIH2. Interacts with FAM81A; the interaction facilitates condensate formation via liquid-liquid phase separation. Interacts with ADGRL3. Interacts with SORCS3. Post-translationally, palmitoylated. Palmitoylation is required for targeting to postsynaptic density, plasma membrane and synapses. Palmitoylation by ZDHHC2 occurs when the synaptic activity decreases and induces DLG4 synaptic clustering. Palmitoylation by ZDHHC15 regulates trafficking to the postsynaptic density and function in synaptogenesis. Palmitoylation may play a role in glutamate receptor GRIA1 synapse clustering. Depalmitoylated by ABHD17A and ABHD17B and to a lesser extent by ABHD17C, ABHD12, ABHD13, LYPLA1 and LYPLA2. Undergoes rapid synaptic palmitoylation/depalmitoylation cycle during neuronal development which slows down in mature neurons. In terms of processing, ubiquitinated by MDM2 in response to NMDA receptor activation, leading to proteasome-mediated degradation of DLG4 which is required for AMPA receptor endocytosis. As to expression, expressed in brain (at protein level). Detected in juxtaparanodal zones in the central nervous system and at nerve terminal plexuses of basket cells in the cerebellum. Expressed in cerebrum. Expressed in hippocampal neurons (at protein level). Isoform 1 and isoform 2: highly expressed in cerebellum, cortex, hippocampus, and corpus striatum.

It localises to the cell membrane. The protein localises to the postsynaptic density. Its subcellular location is the synapse. It is found in the cytoplasm. The protein resides in the cell projection. It localises to the axon. The protein localises to the dendritic spine. Its subcellular location is the dendrite. It is found in the presynapse. Its function is as follows. Postsynaptic scaffolding protein that plays a critical role in synaptogenesis and synaptic plasticity by providing a platform for the postsynaptic clustering of crucial synaptic proteins. Interacts with the cytoplasmic tail of NMDA receptor subunits and shaker-type potassium channels. Required for synaptic plasticity associated with NMDA receptor signaling. Overexpression or depletion of DLG4 changes the ratio of excitatory to inhibitory synapses in hippocampal neurons. May reduce the amplitude of ASIC3 acid-evoked currents by retaining the channel intracellularly. May regulate the intracellular trafficking of ADR1B. Also regulates AMPA-type glutamate receptor (AMPAR) immobilization at postsynaptic density keeping the channels in an activated state in the presence of glutamate and preventing synaptic depression. Under basal conditions, cooperates with FYN to stabilize palmitoyltransferase ZDHHC5 at the synaptic membrane through FYN-mediated phosphorylation of ZDHHC5 and its subsequent inhibition of association with endocytic proteins. This chain is Disks large homolog 4, found in Rattus norvegicus (Rat).